The following is a 436-amino-acid chain: UPF0761 membrane protein Bxeno_A3061 (436 aa).

The next 6 helical transmembrane spans lie at 42-62 (LVPL…FASF), 96-116 (GLTT…MMTV), 136-156 (ILVY…SLSI), 180-200 (ALAG…YVYL), 210-230 (AVIG…GFGY), and 241-261 (VYGA…CWFI).

Belongs to the UPF0761 family.

The protein resides in the cell inner membrane. The polypeptide is UPF0761 membrane protein Bxeno_A3061 (Paraburkholderia xenovorans (strain LB400)).